Reading from the N-terminus, the 346-residue chain is MALMKTKFNLKRRVKLAQGLWLMNWCCVLAGIALFSMGVFLKIELRKRSEVMDNDESHFVPNSLILMGSLACALNAFPGKICYDSLDPTKFPRWKPMLKPYLIICLIFNIFIFFTGVVCFLTRGSLESTLAHGLKNGMRYYKDTDIPGRCFLKKTIDLLQIEFKCCGNNGFRDWFELQWVSNRYLGGRSKEVKDRIQSNVDGKYLIDGVPFSCCNPSSPRPCIQLQVTNNSAHYSYDHQTEELNLWSKGCKEALLNYYTSMMSSMGGMVFLVWIMEMAVMIGLRFLHTCLETIANPEDPECESEGWILEKSLKDTIKSSWELVKSMGKLNKVETAGGEEAGVATVS.

Residues 1–24 (MALMKTKFNLKRRVKLAQGLWLMN) lie on the Cytoplasmic side of the membrane. The chain crosses the membrane as a helical span at residues 25 to 43 (WCCVLAGIALFSMGVFLKI). Residues 44 to 61 (ELRKRSEVMDNDESHFVP) are Lumenal-facing. A helical transmembrane segment spans residues 62–80 (NSLILMGSLACALNAFPGK). Over 81-99 (ICYDSLDPTKFPRWKPMLK) the chain is Cytoplasmic. The helical transmembrane segment at 100-123 (PYLIICLIFNIFIFFTGVVCFLTR) threads the bilayer. Over 124–264 (GSLESTLAHG…LNYYTSMMSS (141 aa)) the chain is Lumenal. N-linked (GlcNAc...) asparagine glycosylation is present at Asn-229. The helical transmembrane segment at 265–290 (MGGMVFLVWIMEMAVMIGLRFLHTCL) threads the bilayer. Over 291–346 (ETIANPEDPECESEGWILEKSLKDTIKSSWELVKSMGKLNKVETAGGEEAGVATVS) the chain is Cytoplasmic.

It belongs to the PRPH2/ROM1 family. As to quaternary structure, homodimer; disulfide-linked. In terms of tissue distribution, found in both rod and cone photoreceptors. Specifically in the rims and incisures of rod and cone outer segment disks.

Its subcellular location is the membrane. May be involved in the morphogenesis of retina outer segment disks and the development and maintenance of the retina ultrastructure. This Xenopus laevis (African clawed frog) protein is Peripherin-2 (prph2).